Consider the following 824-residue polypeptide: Leucine--tRNA ligase (824 aa).

The 'HIGH' region motif lies at 41-51; sequence PYPSGTLHVGH. The short motif at 580–584 is the 'KMSKS' region element; sequence KMSKS. Lys583 lines the ATP pocket.

Belongs to the class-I aminoacyl-tRNA synthetase family.

The protein resides in the cytoplasm. The catalysed reaction is tRNA(Leu) + L-leucine + ATP = L-leucyl-tRNA(Leu) + AMP + diphosphate. This Thermotoga petrophila (strain ATCC BAA-488 / DSM 13995 / JCM 10881 / RKU-1) protein is Leucine--tRNA ligase.